The chain runs to 248 residues: ATP synthase subunit a, chloroplastic (248 aa).

5 helical membrane passes run 38–58 (QVLITSWIVIAVLLGSATIAV), 96–116 (VPFIGTMFLFIFVSNWSGALL), 135–155 (INTTVALALLTSVAYFYAGLA), 200–220 (LVVAVLVSPVPLVVPIPVMFL), and 221–241 (GLFTSGIQALIFATLAAAYIG).

It belongs to the ATPase A chain family. As to quaternary structure, F-type ATPases have 2 components, CF(1) - the catalytic core - and CF(0) - the membrane proton channel. CF(1) has five subunits: alpha(3), beta(3), gamma(1), delta(1), epsilon(1). CF(0) has four main subunits: a, b, b' and c.

The protein localises to the plastid. It localises to the chloroplast thylakoid membrane. Functionally, key component of the proton channel; it plays a direct role in the translocation of protons across the membrane. In Pinus koraiensis (Korean pine), this protein is ATP synthase subunit a, chloroplastic.